A 505-amino-acid polypeptide reads, in one-letter code: Aspartyl/glutamyl-tRNA(Asn/Gln) amidotransferase subunit B (505 aa).

The protein belongs to the GatB/GatE family. GatB subfamily. Heterotrimer of A, B and C subunits.

The catalysed reaction is L-glutamyl-tRNA(Gln) + L-glutamine + ATP + H2O = L-glutaminyl-tRNA(Gln) + L-glutamate + ADP + phosphate + H(+). It catalyses the reaction L-aspartyl-tRNA(Asn) + L-glutamine + ATP + H2O = L-asparaginyl-tRNA(Asn) + L-glutamate + ADP + phosphate + 2 H(+). Allows the formation of correctly charged Asn-tRNA(Asn) or Gln-tRNA(Gln) through the transamidation of misacylated Asp-tRNA(Asn) or Glu-tRNA(Gln) in organisms which lack either or both of asparaginyl-tRNA or glutaminyl-tRNA synthetases. The reaction takes place in the presence of glutamine and ATP through an activated phospho-Asp-tRNA(Asn) or phospho-Glu-tRNA(Gln). The polypeptide is Aspartyl/glutamyl-tRNA(Asn/Gln) amidotransferase subunit B (Streptomyces avermitilis (strain ATCC 31267 / DSM 46492 / JCM 5070 / NBRC 14893 / NCIMB 12804 / NRRL 8165 / MA-4680)).